The sequence spans 391 residues: Formate-dependent phosphoribosylglycinamide formyltransferase (391 aa).

N(1)-(5-phospho-beta-D-ribosyl)glycinamide-binding positions include 18–19 (EL) and Glu-78. ATP contacts are provided by residues Arg-110, Lys-151, 156–161 (SSGKGQ), 191–194 (EEFI), and Glu-199. An ATP-grasp domain is found at 115–305 (ELAHEELGIR…EFELHLRAIL (191 aa)). Residues Glu-264 and Glu-276 each coordinate Mg(2+). N(1)-(5-phospho-beta-D-ribosyl)glycinamide-binding positions include Asp-283, Lys-353, and 360 to 361 (RR).

The protein belongs to the PurK/PurT family. Homodimer.

It carries out the reaction N(1)-(5-phospho-beta-D-ribosyl)glycinamide + formate + ATP = N(2)-formyl-N(1)-(5-phospho-beta-D-ribosyl)glycinamide + ADP + phosphate + H(+). The protein operates within purine metabolism; IMP biosynthesis via de novo pathway; N(2)-formyl-N(1)-(5-phospho-D-ribosyl)glycinamide from N(1)-(5-phospho-D-ribosyl)glycinamide (formate route): step 1/1. Functionally, involved in the de novo purine biosynthesis. Catalyzes the transfer of formate to 5-phospho-ribosyl-glycinamide (GAR), producing 5-phospho-ribosyl-N-formylglycinamide (FGAR). Formate is provided by PurU via hydrolysis of 10-formyl-tetrahydrofolate. This Trichormus variabilis (strain ATCC 29413 / PCC 7937) (Anabaena variabilis) protein is Formate-dependent phosphoribosylglycinamide formyltransferase.